A 1729-amino-acid polypeptide reads, in one-letter code: 1,3-beta-glucan synthase component bgs1 (1729 aa).

Ser23 is modified (phosphoserine). 6 helical membrane passes run 378 to 398, 416 to 436, 448 to 468, 503 to 523, 546 to 566, and 577 to 597; these read WTACGLAGAIASFITLAAVVF, SMLLLISTLLLNIAPVVFIFA, LVVGIVHFFFSLVCVVYYSIT, FVSWCLWITVLVAKFLESYFF, YILGAGLCKAQPKILLSLLYL, and YLWYILISTIYSLAYAFCLGI. Phosphoserine is present on residues Ser784 and Ser788. 8 helical membrane-spanning segments follow: residues 1180-1200, 1237-1257, 1337-1357, 1440-1460, 1484-1504, 1515-1535, 1550-1572, and 1678-1698; these read MVIMFSLQLLMLVIINLGAMY, ILSIFIVFGIAFVPLAVCELG, MLLFGSITAWLPHYIYFWITL, YGEILGPLGTLFFTCIPFLFI, VAPLVLSAIIAFFFFCLGIML, YGVYLAGVAHFLFVCVDVVVF, LLGFVAIISIHRFAHKFFIICFL, and ATLYFSLFIAFFVLLILPFVF.

It belongs to the glycosyltransferase 48 family. As to quaternary structure, component of the 1,3-beta-glucan synthase (GS) complex, composed of at least the alternate catalytic subunits bgs1, bgs2, bgs3, and bgs4, and a regulatory subunit chr4.

It localises to the cell membrane. The protein localises to the cell septum. The catalysed reaction is [(1-&gt;3)-beta-D-glucosyl](n) + UDP-alpha-D-glucose = [(1-&gt;3)-beta-D-glucosyl](n+1) + UDP + H(+). Functionally, alternate catalytic subunit of the 1,3-beta-glucan synthase (GS) complex. Synthesizes 1,3-beta-glucan, a major structural component of the fungal cell wall. Required for the assembly of the division septum and maintenance of cell polarity. The protein is 1,3-beta-glucan synthase component bgs1 (bgs1) of Schizosaccharomyces pombe (strain 972 / ATCC 24843) (Fission yeast).